Here is a 409-residue protein sequence, read N- to C-terminus: Terpredoxin reductase (409 aa).

Thr7–Ala38 contributes to the FAD binding site. Gly151 to Ile159 serves as a coordination point for NAD(+).

FAD is required as a cofactor.

Its function is as follows. The oxidation of alpha-terpineol by cytochrome p450-TERP requires the participation of a flavoprotein, terpredoxin reductase, and an iron-sulfur protein, terpredoxin, to mediate the transfer of electrons from NADH to P450 for oxygen activation. The protein is Terpredoxin reductase (terPA) of Pseudomonas sp.